Consider the following 357-residue polypeptide: GTPase Obg (357 aa).

One can recognise an Obg domain in the interval 1–159; it reads MKFVDEAEIQ…RTLKLELKLL (159 aa). Positions 160-343 constitute an OBG-type G domain; the sequence is ADIGMLGFPN…IMKSAMTLFE (184 aa). GTP contacts are provided by residues 166–173, 191–195, 213–216, 293–296, and 324–326; these read GFPNVGKS, FTTLY, DVPG, NKAD, and SAV. Positions 173 and 193 each coordinate Mg(2+).

Belongs to the TRAFAC class OBG-HflX-like GTPase superfamily. OBG GTPase family. In terms of assembly, monomer. The cofactor is Mg(2+).

The protein resides in the cytoplasm. Its function is as follows. An essential GTPase which binds GTP, GDP and possibly (p)ppGpp with moderate affinity, with high nucleotide exchange rates and a fairly low GTP hydrolysis rate. Plays a role in control of the cell cycle, stress response, ribosome biogenesis and in those bacteria that undergo differentiation, in morphogenesis control. This is GTPase Obg from Xylella fastidiosa (strain 9a5c).